We begin with the raw amino-acid sequence, 147 residues long: MASHRLLLLCLAGLVFVSEAGPTGTGESKCPLMVKVLDAVRGSPAINVAVHVFRKAADDTWEPFASGKTSESGELHGLTTEEEFVEGIYKVEIDTKSYWKALGISPFHEHAEVVFTANDSGPRRYTIAALLSPYSYSTTAVVTNPKE.

The first 20 residues, 1 to 20 (MASHRLLLLCLAGLVFVSEA), serve as a signal peptide directing secretion. Residue cysteine 30 is modified to Sulfocysteine. Residue lysine 35 coordinates L-thyroxine. Glutamate 62 carries the 4-carboxyglutamate; in a patient with Moyamoya disease modification. Serine 72 is subject to Phosphoserine. Residue glutamate 74 coordinates L-thyroxine. Residue asparagine 118 is glycosylated (N-linked (GlcNAc...) asparagine). Residue serine 137 coordinates L-thyroxine.

This sequence belongs to the transthyretin family. Homotetramer. Dimer of dimers. In the homotetramer, subunits assemble around a central channel that can accommodate two ligand molecules. Interacts with RBP4. Post-translationally, not glycosylated under normal conditions. Following unfolding, caused for example by variant AMYLD1 'Gly-38', the cryptic Asn-118 site is exposed and glycosylated by STT3B-containing OST complex, leading to its degradation by the ER-associated degradation (ERAD) pathway. In terms of processing, sulfonation of the reactive cysteine Cys-30 enhances the stability of the native conformation of TTR, avoiding misassembly of the protein leading to amyloid formation. As to expression, detected in serum and cerebrospinal fluid (at protein level). Highly expressed in choroid plexus epithelial cells. Detected in retina pigment epithelium and liver.

Its subcellular location is the secreted. The protein localises to the cytoplasm. Its function is as follows. Thyroid hormone-binding protein. Probably transports thyroxine from the bloodstream to the brain. This is Transthyretin (TTR) from Homo sapiens (Human).